A 432-amino-acid polypeptide reads, in one-letter code: Peptidyl-prolyl cis-trans isomerase cyp6 (432 aa).

The region spanning 1–168 is the PPIase cyclophilin-type domain; it reads MSVLIETTVG…RDIRIKHTII (168 aa). A Phosphoserine modification is found at S206. Residues 244 to 322 form the RRM domain; that stretch reads NVLFVCKLNP…SRIHVDFSQS (79 aa). The interval 330–432 is disordered; the sequence is YNSNRDRKRS…DRRYRDDRYR (103 aa). 3 stretches are compositionally biased toward basic and acidic residues: residues 341-366, 373-395, and 406-432; these read SRSDDREYHRRSDGRYDRSNYRDDYR, DHRDDQSSFRNERFSNYYGDDRS, and NCDDHLRDKSPERRYRYDRRYRDDRYR.

Belongs to the cyclophilin-type PPIase family. PPIL4 subfamily.

It localises to the nucleus. The enzyme catalyses [protein]-peptidylproline (omega=180) = [protein]-peptidylproline (omega=0). Functionally, PPIases accelerate the folding of proteins. It catalyzes the cis-trans isomerization of proline imidic peptide bonds in oligopeptides. The sequence is that of Peptidyl-prolyl cis-trans isomerase cyp6 (cyp6) from Schizosaccharomyces pombe (strain 972 / ATCC 24843) (Fission yeast).